The following is a 662-amino-acid chain: Threonine--tRNA ligase (662 aa).

The TGS domain maps to 1 to 64; it reads MSQSVSLTFP…ADGKIEIITR (64 aa). The tract at residues 245–547 is catalytic; it reads DHRRLGREMD…LIENFAGHMP (303 aa). Zn(2+)-binding residues include Cys-341, His-392, and His-524.

Belongs to the class-II aminoacyl-tRNA synthetase family. In terms of assembly, homodimer. Zn(2+) is required as a cofactor.

It localises to the cytoplasm. The enzyme catalyses tRNA(Thr) + L-threonine + ATP = L-threonyl-tRNA(Thr) + AMP + diphosphate + H(+). Functionally, catalyzes the attachment of threonine to tRNA(Thr) in a two-step reaction: L-threonine is first activated by ATP to form Thr-AMP and then transferred to the acceptor end of tRNA(Thr). Also edits incorrectly charged L-seryl-tRNA(Thr). In Rhizobium rhizogenes (strain K84 / ATCC BAA-868) (Agrobacterium radiobacter), this protein is Threonine--tRNA ligase.